The primary structure comprises 90 residues: Small ribosomal subunit protein uS15c (90 aa).

It belongs to the universal ribosomal protein uS15 family. As to quaternary structure, part of the 30S ribosomal subunit.

The protein localises to the plastid. Its subcellular location is the chloroplast. The chain is Small ribosomal subunit protein uS15c (rps15-A) from Ipomoea purpurea (Common morning glory).